The sequence spans 365 residues: 3-isopropylmalate dehydrogenase (365 aa).

NAD(+) is bound at residue 78–91 (GKKWNNLPIEKRPE). 4 residues coordinate substrate: Arg99, Arg109, Arg139, and Asp228. 3 residues coordinate Mg(2+): Asp228, Asp252, and Asp256. NAD(+) is bound at residue 286–298 (GSAPDIAGKNIAN).

The protein belongs to the isocitrate and isopropylmalate dehydrogenases family. LeuB type 1 subfamily. In terms of assembly, homodimer. The cofactor is Mg(2+). Mn(2+) serves as cofactor.

The protein localises to the cytoplasm. It carries out the reaction (2R,3S)-3-isopropylmalate + NAD(+) = 4-methyl-2-oxopentanoate + CO2 + NADH. Its pathway is amino-acid biosynthesis; L-leucine biosynthesis; L-leucine from 3-methyl-2-oxobutanoate: step 3/4. Its function is as follows. Catalyzes the oxidation of 3-carboxy-2-hydroxy-4-methylpentanoate (3-isopropylmalate) to 3-carboxy-4-methyl-2-oxopentanoate. The product decarboxylates to 4-methyl-2 oxopentanoate. This chain is 3-isopropylmalate dehydrogenase, found in Buchnera aphidicola subsp. Macrosiphoniella ludovicianae.